Reading from the N-terminus, the 416-residue chain is Glutamyl-tRNA reductase (416 aa).

Residues 49 to 52, S105, 110 to 112, and Q116 each bind substrate; these read TCNR and EPQ. C50 (nucleophile) is an active-site residue. Position 185 to 190 (185 to 190) interacts with NADP(+); it reads GAGETI.

Belongs to the glutamyl-tRNA reductase family. As to quaternary structure, homodimer.

The catalysed reaction is (S)-4-amino-5-oxopentanoate + tRNA(Glu) + NADP(+) = L-glutamyl-tRNA(Glu) + NADPH + H(+). It functions in the pathway porphyrin-containing compound metabolism; protoporphyrin-IX biosynthesis; 5-aminolevulinate from L-glutamyl-tRNA(Glu): step 1/2. In terms of biological role, catalyzes the NADPH-dependent reduction of glutamyl-tRNA(Glu) to glutamate 1-semialdehyde (GSA). The polypeptide is Glutamyl-tRNA reductase (Shewanella piezotolerans (strain WP3 / JCM 13877)).